Here is a 332-residue protein sequence, read N- to C-terminus: L-lactate dehydrogenase A chain (332 aa).

N-acetylalanine is present on A2. K5 bears the N6-acetyllysine; alternate mark. K5 carries the post-translational modification N6-succinyllysine; alternate. K14 carries the N6-acetyllysine modification. Residue 29–57 (GAVGMACAISILMKDLADEVALVDVMEDK) coordinates NAD(+). K57 carries the N6-acetyllysine; alternate modification. A Glycyl lysine isopeptide (Lys-Gly) (interchain with G-Cter in SUMO2); alternate cross-link involves residue K57. The residue at position 81 (K81) is an N6-acetyllysine. R106 is a substrate binding site. K118 carries the post-translational modification N6-acetyllysine; alternate. K118 carries the N6-succinyllysine; alternate modification. An N6-acetyllysine modification is found at K126. N138 serves as a coordination point for NAD(+). Residues N138 and R169 each contribute to the substrate site. H193 serves as the catalytic Proton acceptor. 2 positions are modified to N6-acetyllysine: K224 and K232. Residue Y239 is modified to Phosphotyrosine. An N6-acetyllysine modification is found at K243. A substrate-binding site is contributed by T248. Residue T309 is modified to Phosphothreonine. Residue K318 is modified to N6-acetyllysine; alternate. The residue at position 318 (K318) is an N6-succinyllysine; alternate. At T322 the chain carries Phosphothreonine.

This sequence belongs to the LDH/MDH superfamily. LDH family. As to quaternary structure, homotetramer. Interacts with PTEN upstream reading frame protein MP31. In terms of processing, ISGylated.

It is found in the cytoplasm. The catalysed reaction is (S)-lactate + NAD(+) = pyruvate + NADH + H(+). The protein operates within fermentation; pyruvate fermentation to lactate; (S)-lactate from pyruvate: step 1/1. Its function is as follows. Interconverts simultaneously and stereospecifically pyruvate and lactate with concomitant interconversion of NADH and NAD(+). The protein is L-lactate dehydrogenase A chain (LDHA) of Bos taurus (Bovine).